Reading from the N-terminus, the 257-residue chain is MKSFGLIALAICGVICVAAEPQHTYDGRNGPHVFGSPGNQVYIRGQNEGTYSVPGVGGQFQNAPQRGEHVYTDEAGNTFVNRKNAGGPASHTISGPNFSAKNLGPNGAKSVGIPQRARRSPQFHVERPGRTVDVGNGGFYIQRGRRSPQLHVARPDRTVTIGNGGVYIQRSRRSPQFHVERPDRTVDFGNGGFSAQRFRRGINDARVQGENFVARDDQAGIWDNNVSVWKRPDGRTVTIDRNGHTIVSGRGRPAQHY.

A signal peptide spans 1-19 (MKSFGLIALAICGVICVAA). Positions 20-21 (EP) are excised as a propeptide. A Pyrrolidone carboxylic acid modification is found at glutamine 22. The interval 95–122 (GPNFSAKNLGPNGAKSVGIPQRARRSPQ) is disordered. Asparagine 97 carries an N-linked (GlcNAc...) asparagine glycan. The propeptide occupies 118-121 (RRSP). Glutamine 122 bears the Pyrrolidone carboxylic acid mark. Positions 145–148 (RRSP) are excised as a propeptide. Residue glutamine 149 is modified to Pyrrolidone carboxylic acid. A propeptide spanning residues 172-175 (RRSP) is cleaved from the precursor. Pyrrolidone carboxylic acid is present on glutamine 176. A propeptide spanning residues 199–204 (RRGIND) is cleaved from the precursor. Asparagine 225 is a glycosylation site (N-linked (GlcNAc...) asparagine).

Proteolytically cleaved. Hemolymph (at protein level).

The protein localises to the secreted. Secreted immune-induced peptides induced by Toll signaling. Has a significant role in resistance to infection by the entomopathogenic fungus B.bassiana R444 and weak antifungal activity against M.rileyi PHP1705. In adult males, activity appears to be important for neuromuscular processes that mediate correct wing posture upon Toll activation. This is Baramicin A1 from Drosophila melanogaster (Fruit fly).